We begin with the raw amino-acid sequence, 217 residues long: Glycerol-3-phosphate acyltransferase (217 aa).

6 helical membrane passes run 3 to 23, 56 to 76, 78 to 98, 120 to 140, 142 to 162, and 163 to 183; these read IVILLLVAYLLGSIPSGVWIG, VLLMDILKGTLATSLPYLFGL, GVNPLFFGVAAVLGHTFPIFA, FFIYSALIFVICLYLTSMVSL, SMISAVLITLSTIILPFTVPA, and ILPTFNWLLTVIAIALTTFIF.

This sequence belongs to the PlsY family. As to quaternary structure, probably interacts with PlsX.

It is found in the cell membrane. The enzyme catalyses an acyl phosphate + sn-glycerol 3-phosphate = a 1-acyl-sn-glycero-3-phosphate + phosphate. Its pathway is lipid metabolism; phospholipid metabolism. In terms of biological role, catalyzes the transfer of an acyl group from acyl-phosphate (acyl-PO(4)) to glycerol-3-phosphate (G3P) to form lysophosphatidic acid (LPA). This enzyme utilizes acyl-phosphate as fatty acyl donor, but not acyl-CoA or acyl-ACP. This chain is Glycerol-3-phosphate acyltransferase, found in Enterococcus faecalis (strain ATCC 700802 / V583).